The primary structure comprises 109 residues: MALVRDDFDDIPDSEIHETIVERIEGLGEMFPDALRSAVHSTVDWSIWGVKGVFSLTKSTIWVVSTTSLIAFLPYIIEKERSDLEKTQVAQQRQMLLGPSAAIQQAKTA.

At 1-60 (MALVRDDFDDIPDSEIHETIVERIEGLGEMFPDALRSAVHSTVDWSIWGVKGVFSLTKST) the chain is on the cytoplasmic side. A helical membrane pass occupies residues 61–77 (IWVVSTTSLIAFLPYII). At 78-109 (EKERSDLEKTQVAQQRQMLLGPSAAIQQAKTA) the chain is on the mitochondrial intermembrane side.

It belongs to the Tom22 family. As to quaternary structure, forms part of the preprotein translocase complex of the outer mitochondrial membrane (TOM complex).

It localises to the mitochondrion outer membrane. Functionally, central receptor component of the translocase of the outer membrane of mitochondria (TOM complex) responsible for the recognition and translocation of cytosolically synthesized mitochondrial preproteins. Together with the peripheral receptor tomm-20 functions as the transit peptide receptor and facilitates the movement of preproteins into the translocation pore. In Caenorhabditis elegans, this protein is Mitochondrial import receptor subunit TOM22 homolog.